The primary structure comprises 331 residues: MAAIFSLFLFFILFIVSLLIILSFIVRPRSVTIPIKFRHVFITGGSSGIGLALAHRAVSEGAKVSILARSTEKLAEAKRSIQLATGVEVATFSADVRDYDAVSKAIDESGPIDVLIVNQGVFIGKELEKQSPEEVKFMIDVNLTGSFNVIKAALPAMKAREGRGPASISLVSSQAGQAGIYGYTAYSASKFGLQGLAQALQQEVISDGIHVTLLFPPDTDTPGFEQELKKRPELTSIIAASSGSMKTNEVAKICFDGIKAGKFTVTCHFIGFLLSIASTGMSPQGSFWLALTEVMFGGLIRLASLVFQWQWYKTIEKWSQRNKKEVNSKLA.

Residues 1-7 (MAAIFSL) lie on the Lumenal side of the membrane. Residues 8–28 (FLFFILFIVSLLIILSFIVRP) traverse the membrane as a helical segment. The Cytoplasmic portion of the chain corresponds to 29 to 262 (RSVTIPIKFR…ICFDGIKAGK (234 aa)). Residues G44, S46, S47, G48, R69, K73, and D95 each contribute to the NADPH site. Positions 44-48 (GGSSG) match the GXSXG motif. S172 (proton donor) is an active-site residue. The Proton acceptor role is filled by Y186. Y186 and K190 together coordinate NADP(+). K190 (lowers pKa of active site Tyr) is an active-site residue. A helical membrane pass occupies residues 263 to 283 (FTVTCHFIGFLLSIASTGMSP). Over 284–286 (QGS) the chain is Lumenal. Residues 287-307 (FWLALTEVMFGGLIRLASLVF) form a helical membrane-spanning segment. The Cytoplasmic segment spans residues 308–331 (QWQWYKTIEKWSQRNKKEVNSKLA).

It belongs to the short-chain dehydrogenases/reductases (SDR) family. Expressed in roots, leaves, stems and flowers.

The protein resides in the endoplasmic reticulum membrane. The enzyme catalyses sphinganine + NADP(+) = 3-oxosphinganine + NADPH + H(+). Its pathway is lipid metabolism; sphingolipid metabolism. Its function is as follows. Catalyzes the reduction of 3'-oxosphinganine (3-ketodihydrosphingosine/KDS) to sphinganine (dihydrosphingosine/DHS), the second step of de novo sphingolipid biosynthesis. In plants, sphingolipids seems to play a critical role in mineral ion homeostasis, most likely through their involvement in the ion transport functionalities of membrane systems in the root. Is stereospecific for D-erythro-DHS production and does not produce L-threo-DHS. The sequence is that of 3-dehydrosphinganine reductase TSC10B (TSC10B) from Arabidopsis thaliana (Mouse-ear cress).